The following is a 433-amino-acid chain: 3-phosphoshikimate 1-carboxyvinyltransferase (433 aa).

The 3-phosphoshikimate site is built by lysine 22, serine 23, and arginine 27. Position 22 (lysine 22) interacts with phosphoenolpyruvate. Residues glycine 95 and arginine 123 each contribute to the phosphoenolpyruvate site. The 3-phosphoshikimate site is built by serine 167, glutamine 169, aspartate 315, and lysine 342. Residue glutamine 169 participates in phosphoenolpyruvate binding. Catalysis depends on aspartate 315, which acts as the Proton acceptor. Residues arginine 346 and arginine 387 each contribute to the phosphoenolpyruvate site.

The protein belongs to the EPSP synthase family. Monomer.

It is found in the cytoplasm. The catalysed reaction is 3-phosphoshikimate + phosphoenolpyruvate = 5-O-(1-carboxyvinyl)-3-phosphoshikimate + phosphate. It participates in metabolic intermediate biosynthesis; chorismate biosynthesis; chorismate from D-erythrose 4-phosphate and phosphoenolpyruvate: step 6/7. Catalyzes the transfer of the enolpyruvyl moiety of phosphoenolpyruvate (PEP) to the 5-hydroxyl of shikimate-3-phosphate (S3P) to produce enolpyruvyl shikimate-3-phosphate and inorganic phosphate. This chain is 3-phosphoshikimate 1-carboxyvinyltransferase, found in Legionella pneumophila (strain Corby).